The chain runs to 317 residues: Acetyl-coenzyme A carboxylase carboxyl transferase subunit alpha (317 aa).

The region spanning 39–293 (RLKKKSISLT…KTSLAQGVAE (255 aa)) is the CoA carboxyltransferase C-terminal domain.

Belongs to the AccA family. As to quaternary structure, acetyl-CoA carboxylase is a heterohexamer composed of biotin carboxyl carrier protein (AccB), biotin carboxylase (AccC) and two subunits each of ACCase subunit alpha (AccA) and ACCase subunit beta (AccD).

It localises to the cytoplasm. The catalysed reaction is N(6)-carboxybiotinyl-L-lysyl-[protein] + acetyl-CoA = N(6)-biotinyl-L-lysyl-[protein] + malonyl-CoA. It participates in lipid metabolism; malonyl-CoA biosynthesis; malonyl-CoA from acetyl-CoA: step 1/1. Component of the acetyl coenzyme A carboxylase (ACC) complex. First, biotin carboxylase catalyzes the carboxylation of biotin on its carrier protein (BCCP) and then the CO(2) group is transferred by the carboxyltransferase to acetyl-CoA to form malonyl-CoA. The protein is Acetyl-coenzyme A carboxylase carboxyl transferase subunit alpha of Marinobacter nauticus (strain ATCC 700491 / DSM 11845 / VT8) (Marinobacter aquaeolei).